We begin with the raw amino-acid sequence, 658 residues long: Palmitoyltransferase ZDHHC5-B (658 aa).

The Cytoplasmic portion of the chain corresponds to methionine 1 to arginine 24. A helical transmembrane segment spans residues tyrosine 25–phenylalanine 45. The Extracellular portion of the chain corresponds to threonine 46–serine 56. A helical membrane pass occupies residues phenylalanine 57–threonine 77. Topologically, residues phenylalanine 78 to tyrosine 159 are cytoplasmic. Residues lysine 115–leucine 165 enclose the DHHC domain. The active-site S-palmitoyl cysteine intermediate is cysteine 145. The chain crosses the membrane as a helical span at residues phenylalanine 160–leucine 180. The Extracellular segment spans residues tyrosine 181 to cysteine 202. Residues valine 203–alanine 223 traverse the membrane as a helical segment. Residues arginine 224–valine 658 are Cytoplasmic-facing. Disordered stretches follow at residues glutamate 306–serine 419, glutamate 490–alanine 522, and glutamine 540–valine 658. The segment covering proline 360–proline 398 has biased composition (polar residues). Positions glycine 407 to serine 419 are enriched in gly residues. Over residues serine 565 to serine 575 the composition is skewed to pro residues. Positions serine 619–asparagine 633 are enriched in polar residues. Residues threonine 634–lysine 644 are compositionally biased toward basic residues.

It belongs to the DHHC palmitoyltransferase family. ERF2/ZDHHC9 subfamily.

It localises to the cell membrane. It carries out the reaction L-cysteinyl-[protein] + hexadecanoyl-CoA = S-hexadecanoyl-L-cysteinyl-[protein] + CoA. In terms of biological role, palmitoyltransferase that catalyzes the addition of palmitate onto various protein substrates and is involved in a variety of cellular processes. This Danio rerio (Zebrafish) protein is Palmitoyltransferase ZDHHC5-B.